Reading from the N-terminus, the 306-residue chain is Ribosomal protein L11 methyltransferase (306 aa).

Threonine 152, glycine 179, aspartate 201, and asparagine 243 together coordinate S-adenosyl-L-methionine.

This sequence belongs to the methyltransferase superfamily. PrmA family.

The protein resides in the cytoplasm. It carries out the reaction L-lysyl-[protein] + 3 S-adenosyl-L-methionine = N(6),N(6),N(6)-trimethyl-L-lysyl-[protein] + 3 S-adenosyl-L-homocysteine + 3 H(+). Functionally, methylates ribosomal protein L11. This chain is Ribosomal protein L11 methyltransferase, found in Geobacter sp. (strain M21).